Consider the following 471-residue polypeptide: Glutamate--tRNA ligase (471 aa).

The short motif at P10 to G20 is the 'HIGH' region element. Zn(2+)-binding residues include C107, C109, C134, and E136. Positions R244–R248 match the 'KMSKS' region motif. K247 is an ATP binding site.

Belongs to the class-I aminoacyl-tRNA synthetase family. Glutamate--tRNA ligase type 1 subfamily. As to quaternary structure, monomer. Zn(2+) is required as a cofactor.

It is found in the cytoplasm. It carries out the reaction tRNA(Glu) + L-glutamate + ATP = L-glutamyl-tRNA(Glu) + AMP + diphosphate. Its function is as follows. Catalyzes the attachment of glutamate to tRNA(Glu) in a two-step reaction: glutamate is first activated by ATP to form Glu-AMP and then transferred to the acceptor end of tRNA(Glu). The polypeptide is Glutamate--tRNA ligase (Anaeromyxobacter sp. (strain Fw109-5)).